Reading from the N-terminus, the 130-residue chain is Mini-ribonuclease 3 (130 aa).

D19 is an active-site residue. A disordered region spans residues 69-91 (EQDVVRRGRNAKGHGAPKSADPA).

It belongs to the MrnC RNase family. In terms of assembly, homodimer. It depends on Mg(2+) as a cofactor.

It is found in the cytoplasm. Involved in correct processing of both the 5' and 3' ends of 23S rRNA precursor. Processes 30S rRNA precursor transcript even in absence of ribonuclease 3 (Rnc); Rnc processes 30S rRNA into smaller rRNA precursors. This Symbiobacterium thermophilum (strain DSM 24528 / JCM 14929 / IAM 14863 / T) protein is Mini-ribonuclease 3.